The chain runs to 136 residues: Alpha-2-purothionin (136 aa).

A signal peptide spans 1 to 27 (MGSKGLKGVMVCLLILGLVLEQVQVEG). Cystine bridges form between Cys-30-Cys-66, Cys-31-Cys-58, Cys-39-Cys-56, and Cys-43-Cys-52. Positions 73-136 (LALESNSDEP…GDAGLTSLDA (64 aa)) are cleaved as a propeptide — acidic domain.

Belongs to the plant thionin (TC 1.C.44) family. 4 C-C subfamily.

The protein localises to the secreted. Functionally, thionins are small plant proteins which are toxic to animal cells. They seem to exert their toxic effect at the level of the cell membrane. Their precise function is not known. The protein is Alpha-2-purothionin (THI1.2) of Triticum aestivum (Wheat).